The sequence spans 1136 residues: METRPSFAPNLYFCDARLVGPLHAWPPLFERVAAWGFDHVLIGGLWAASRRGYPRHVADPDRPAESFATSLDATSALARLSDSAREHGLRIAVEVVVDRVAREHPLHDAHRAWYVVDERDDALIDPRTAALAHDVAHANVGSAAALDALADWWRARLGALADAGAAAFLVDAPQRMPAHWWAALLRALRQARADLPVIAGVPGREREALAQLACAGFDAAFSSLRWWDLRAPWFVEEHRLLRRVGAPIAFPDAFDGPRLAHDWRQAAPETIERAHRRALWTAAALGTGWLVPMGFERGVAVELMAREPRADAYRAALDSAPFDLSGAIAEANALRRATPALRGNGEIAQLTGADAPATVLLRGARTALEYDDEAALIAVNPDLAHPAAIAPCAALAGVPGGFTRFAPFADGRRPRMGALEPFALAAGACTLLRAQRARPVTTAPAEDRRGNRPGTRASVTAALAGERIAIERIEPVVDDGRFAVKRVIGERLAVRAAIFADGHARLAAAVQWRAADENGWHEARCAAEGNDAWRADIPLERLGRHLFRVIAWRDDWATLVDEIGKKHAAGQAVALELEEARRLAADVLTRAPEANPAALAVLREFAAALDAAPPDQRLALIGAPHVADAFAALRERAFATRDAPVFPVDVERRAARFASWYEMFPRSASDDVRRHGTFDDVVAHLPRIRDMGFDVLYFPPIHPIGTTARKGRNNSLQAAPDDVGSPYAIGSPAGGHTAVHPQLGSLDAFRRLVAAARAHDLEIALDFAVQCSPDHPWLTEHPGWFAWRPDGSLRYAENPPKRYQDIVNPDFYARDAMPALWIALRDVVLFWIDAGVRIFRVDNPHTKPLPFWAWMIADVRARHPDTVFLSEAFTRPSMMYRLAKLGFSQSYTYFTWRESKREFIDYLTELADGPAREYFRPNFFVNTPDINPRHLQQAPRTQFVIRAALAATLSGLWGMYSGFELCESDALPDSEEYRDAEKYELRARDWRRPGHIGDEIARLNRARRDNPALQTHLGIRFAHAPNDAVLVFSKATPAHDNVVVVAISLDPWHPQATDFTLDAALYRGWGIADGERLVAVDQTADHVETWHGRRHYVALDPHVRPFAIWRVAPAAGVARGARDDARDVPAQEVHER.

The segment at 1–439 (METRPSFAPN…TLLRAQRARP (439 aa)) is unknown. Positions 440–1136 (VTTAPAEDRR…DVPAQEVHER (697 aa)) are maltosyltransferase. K710, Q770, and D805 together coordinate alpha-maltose 1-phosphate. Catalysis depends on D842, which acts as the Nucleophile. N843 lines the alpha-maltose 1-phosphate pocket. E871 functions as the Proton donor in the catalytic mechanism. Residue 982–983 (KY) participates in alpha-maltose 1-phosphate binding.

It in the C-terminal section; belongs to the glycosyl hydrolase 13 family. GlgE subfamily. As to quaternary structure, homodimer.

It carries out the reaction alpha-maltose 1-phosphate + [(1-&gt;4)-alpha-D-glucosyl](n) = [(1-&gt;4)-alpha-D-glucosyl](n+2) + phosphate. Functionally, maltosyltransferase that uses maltose 1-phosphate (M1P) as the sugar donor to elongate linear or branched alpha-(1-&gt;4)-glucans. Is involved in a branched alpha-glucan biosynthetic pathway from trehalose, together with TreS, Mak and GlgB. The chain is Alpha-1,4-glucan:maltose-1-phosphate maltosyltransferase (glgE) from Burkholderia pseudomallei (strain K96243).